A 664-amino-acid polypeptide reads, in one-letter code: Sorbicillinoid biosynthetic cluster transcription factor sor3 (664 aa).

The segment at residues 40-67 (CQSCRASKVKCDGGRPVCARCQKRGRAC) is a DNA-binding region (zn(2)-C6 fungal-type). A disordered region spans residues 68–102 (SYSQHDAASPRGRGRQRAKAPTRQPRPIRSRASVE).

The protein resides in the nucleus. Its function is as follows. Transcription factor that acts in concert with sor4 which is a transcriptional activator of the gene cluster that mediates the biosynthesis of sorbicillinoids, a diverse group of yellow secondary metabolites that restrict growth of competing pathogenic fungi but not of bacteria. Regulates the cluster genes in a light dependent manner. Also plays a direct or indirect role in regulation of paracelsin biosynthesis and cellulase gene expression. In Hypocrea jecorina (strain QM6a) (Trichoderma reesei), this protein is Sorbicillinoid biosynthetic cluster transcription factor sor3.